Reading from the N-terminus, the 336-residue chain is Acetyl-coenzyme A carboxylase carboxyl transferase subunit beta (336 aa).

In terms of domain architecture, CoA carboxyltransferase N-terminal spans 27–297 (LWTKCESCQG…VAPAPAPAAT (271 aa)). Zn(2+)-binding residues include C31, C34, C50, and C53. The C4-type zinc-finger motif lies at 31-53 (CESCQGILYRPDLERNLEVCPKC). The disordered stretch occupies residues 287 to 336 (SVAPAPAPAATVDPEPESAEPEAPAEEAGPAGAAGDQAGESQDEGDPRNA). Residues 300–311 (PEPESAEPEAPA) show a composition bias toward acidic residues. Low complexity predominate over residues 312-326 (EEAGPAGAAGDQAGE).

The protein belongs to the AccD/PCCB family. Acetyl-CoA carboxylase is a heterohexamer composed of biotin carboxyl carrier protein (AccB), biotin carboxylase (AccC) and two subunits each of ACCase subunit alpha (AccA) and ACCase subunit beta (AccD). Zn(2+) is required as a cofactor.

It localises to the cytoplasm. It carries out the reaction N(6)-carboxybiotinyl-L-lysyl-[protein] + acetyl-CoA = N(6)-biotinyl-L-lysyl-[protein] + malonyl-CoA. Its pathway is lipid metabolism; malonyl-CoA biosynthesis; malonyl-CoA from acetyl-CoA: step 1/1. In terms of biological role, component of the acetyl coenzyme A carboxylase (ACC) complex. Biotin carboxylase (BC) catalyzes the carboxylation of biotin on its carrier protein (BCCP) and then the CO(2) group is transferred by the transcarboxylase to acetyl-CoA to form malonyl-CoA. The protein is Acetyl-coenzyme A carboxylase carboxyl transferase subunit beta of Halorhodospira halophila (strain DSM 244 / SL1) (Ectothiorhodospira halophila (strain DSM 244 / SL1)).